The primary structure comprises 1137 residues: AP-4 complex subunit epsilon-1 (1137 aa).

A phosphoserine mark is found at S700 and S857. An interaction with TEPSIN region spans residues 727-1137 (SGALPVPQES…YQCQKVMEGS (411 aa)).

The protein belongs to the adaptor complexes large subunit family. Adaptor protein complex 4 (AP-4) is a heterotetramer composed of two large adaptins (epsilon-type subunit AP4E1 and beta-type subunit AP4B1), a medium adaptin (mu-type subunit AP4M1) and a small adaptin (sigma-type AP4S1). Interacts with TEPSIN. Interacts with GRIA2; probably indirect it mediates the somatodendritic localization of GRIA2 in neurons. As to expression, widely expressed.

The protein resides in the golgi apparatus. It localises to the trans-Golgi network membrane. Functionally, component of the adaptor protein complex 4 (AP-4). Adaptor protein complexes are vesicle coat components involved both in vesicle formation and cargo selection. They control the vesicular transport of proteins in different trafficking pathways. AP-4 forms a non clathrin-associated coat on vesicles departing the trans-Golgi network (TGN) and may be involved in the targeting of proteins from the trans-Golgi network (TGN) to the endosomal-lysosomal system. It is also involved in protein sorting to the basolateral membrane in epithelial cells and the proper asymmetric localization of somatodendritic proteins in neurons. AP-4 is involved in the recognition and binding of tyrosine-based sorting signals found in the cytoplasmic part of cargos, but may also recognize other types of sorting signal. The protein is AP-4 complex subunit epsilon-1 of Homo sapiens (Human).